We begin with the raw amino-acid sequence, 485 residues long: Polyol:NADP oxidoreductase (485 aa).

Belongs to the mannitol dehydrogenase family.

It is found in the cytoplasm. This Gluconobacter oxydans (strain 621H) (Gluconobacter suboxydans) protein is Polyol:NADP oxidoreductase (por).